The chain runs to 375 residues: Succinyl-diaminopimelate desuccinylase (375 aa).

Position 66 (His66) interacts with Zn(2+). Asp68 is an active-site residue. Asp99 is a binding site for Zn(2+). The active-site Proton acceptor is Glu133. 3 residues coordinate Zn(2+): Glu134, Glu162, and His348.

This sequence belongs to the peptidase M20A family. DapE subfamily. In terms of assembly, homodimer. It depends on Zn(2+) as a cofactor. Co(2+) is required as a cofactor.

The catalysed reaction is N-succinyl-(2S,6S)-2,6-diaminopimelate + H2O = (2S,6S)-2,6-diaminopimelate + succinate. It participates in amino-acid biosynthesis; L-lysine biosynthesis via DAP pathway; LL-2,6-diaminopimelate from (S)-tetrahydrodipicolinate (succinylase route): step 3/3. Its function is as follows. Catalyzes the hydrolysis of N-succinyl-L,L-diaminopimelic acid (SDAP), forming succinate and LL-2,6-diaminopimelate (DAP), an intermediate involved in the bacterial biosynthesis of lysine and meso-diaminopimelic acid, an essential component of bacterial cell walls. The protein is Succinyl-diaminopimelate desuccinylase of Pectobacterium atrosepticum (strain SCRI 1043 / ATCC BAA-672) (Erwinia carotovora subsp. atroseptica).